A 782-amino-acid chain; its full sequence is Homeotic protein proboscipedia (782 aa).

Disordered regions lie at residues 1–23, 153–195, 251–336, 358–380, 439–493, and 547–586; these read MQEVCSSLDTTSMGTQIKSESPL, PQTP…VPEN, MKHK…GISS, SSVSLDEDIEESSPIKVKKKDDG, IATP…QQQP, and YYNYNDTNGTPYLNHQQQHHHHAQHHQQQQHHQNHVADFE. An Antp-type hexapeptide motif is present at residues 164-169; sequence EYPWMK. Positions 198–257 form a DNA-binding region, homeobox; sequence PRRLRTAYTNTQLLELEKEFHFNKYLCRPRRIEIAASLDLTERQVKVWFQNRRMKHKRQT. A compositionally biased stretch (low complexity) spans 308–321; sequence NNNTPSATNNNPSA. Polar residues predominate over residues 322-336; it reads GNLTPNSSLETGISS. Residues 452-463 are compositionally biased toward gly residues; sequence NGSGGGPAGGYF. Low complexity predominate over residues 464–493; the sequence is PGYYPSPKQQQQVQQQQLHPQQQQLPQQQP. A compositionally biased stretch (basic residues) spans 563–580; the sequence is QQHHHHAQHHQQQQHHQN.

The protein belongs to the Antp homeobox family. Proboscipedia subfamily.

It is found in the nucleus. Sequence-specific transcription factor which is part of a developmental regulatory system that provides cells with specific positional identities on the anterior-posterior axis. Controls development of mouthparts, and labial and maxillary palps. In Drosophila melanogaster (Fruit fly), this protein is Homeotic protein proboscipedia (pb).